Here is a 654-residue protein sequence, read N- to C-terminus: Carboxypeptidase Z (654 aa).

The first 20 residues, 1–20, serve as a signal peptide directing secretion; that stretch reads MPTMPLLLAALAALAVLALA. In terms of domain architecture, FZ spans 43-165; sequence THSATCVDLH…APEEEGCYDP (123 aa). Disulfide bonds link C48/C114, C56/C107, C98/C134, C123/C162, and C127/C151. N-linked (GlcNAc...) asparagine glycosylation occurs at N62. The Peptidase M14 domain maps to 191-507; it reads AHHSYAQMVR…EPLLNFLEMV (317 aa). Zn(2+)-binding residues include H253 and E256. A glycan (N-linked (GlcNAc...) asparagine) is linked at N286. Residue H385 coordinates Zn(2+). The active-site Proton donor/acceptor is the E477. The segment at 596 to 630 is disordered; sequence FLPGPSRALPRFQDPQREPTQMDFEPPRARRQPAS.

This sequence belongs to the peptidase M14 family. Requires Zn(2+) as cofactor.

The protein localises to the secreted. Its subcellular location is the extracellular space. It localises to the extracellular matrix. Inhibited by 2-mercaptomethyl-3-guanidinoethylthiopropanoic acid (MGTA) and guanidinoethylmercaptosuccinic acid (GEMSA). Inhibited by chelating agents such as EDTA and EGTA. In terms of biological role, cleaves substrates with C-terminal arginine residues. Probably modulates the Wnt signaling pathway, by cleaving some undefined protein. May play a role in cleavage during prohormone processing. This Mus musculus (Mouse) protein is Carboxypeptidase Z (Cpz).